Reading from the N-terminus, the 200-residue chain is Anthranilate synthase component 2, pyocyanine specific (200 aa).

In terms of domain architecture, Glutamine amidotransferase type-1 spans 2-195 (RITLLDNFDS…LLWCGALAVR (194 aa)). Position 56-58 (56-58 (GPG)) interacts with L-glutamine. Catalysis depends on Cys83, which acts as the Nucleophile; for GATase activity. Residues Gln87 and 133-134 (SL) contribute to the L-glutamine site. Catalysis depends on for GATase activity residues His169 and Glu171.

In terms of assembly, heterotetramer consisting of two non-identical subunits: a beta subunit (PhnB) and a large alpha subunit (PhnA).

It carries out the reaction chorismate + L-glutamine = anthranilate + pyruvate + L-glutamate + H(+). Its pathway is secondary metabolite biosynthesis; pyocyanine biosynthesis. In terms of biological role, part of a heterotetrameric complex that catalyzes the two-step biosynthesis of anthranilate, a precursor for Pseudomonas quinolone signal (2-heptyl-3-hydroxy-4-quinolone; PQS) production which is required to induce the genes for the biosynthesis of the virulence factor pyocyanine (PCN), a characteristic blue-green phenazine pigment produced by P.aeruginosa. In the first step, the glutamine-binding beta subunit (PhnB) of anthranilate synthase (AS) provides the glutamine amidotransferase activity which generates ammonia as a substrate that, along with chorismate, is used in the second step, catalyzed by the large alpha subunit of AS (PhnA) to produce anthranilate. This Pseudomonas aeruginosa (strain ATCC 15692 / DSM 22644 / CIP 104116 / JCM 14847 / LMG 12228 / 1C / PRS 101 / PAO1) protein is Anthranilate synthase component 2, pyocyanine specific.